Consider the following 151-residue polypeptide: MRTVIQRVKYAKVSVDGKILGEINKGLLVLLGITHEDSIKEVKWLVNKTKNLRIFEDEEEKMNLSLEDVKGKALIISQFTLYGNSIKGNRPSFIDAAKPDLAKDLYLKFIEELKSFDIETQEGEFGADMKVELLNDGPVTIIIDTKDANIK.

A Gly-cisPro motif, important for rejection of L-amino acids motif is present at residues 137 to 138; it reads GP.

This sequence belongs to the DTD family. Homodimer.

It localises to the cytoplasm. It carries out the reaction glycyl-tRNA(Ala) + H2O = tRNA(Ala) + glycine + H(+). It catalyses the reaction a D-aminoacyl-tRNA + H2O = a tRNA + a D-alpha-amino acid + H(+). In terms of biological role, an aminoacyl-tRNA editing enzyme that deacylates mischarged D-aminoacyl-tRNAs. Also deacylates mischarged glycyl-tRNA(Ala), protecting cells against glycine mischarging by AlaRS. Acts via tRNA-based rather than protein-based catalysis; rejects L-amino acids rather than detecting D-amino acids in the active site. By recycling D-aminoacyl-tRNA to D-amino acids and free tRNA molecules, this enzyme counteracts the toxicity associated with the formation of D-aminoacyl-tRNA entities in vivo and helps enforce protein L-homochirality. The protein is D-aminoacyl-tRNA deacylase of Fusobacterium nucleatum subsp. nucleatum (strain ATCC 25586 / DSM 15643 / BCRC 10681 / CIP 101130 / JCM 8532 / KCTC 2640 / LMG 13131 / VPI 4355).